Reading from the N-terminus, the 213-residue chain is Large ribosomal subunit protein uL4 (213 aa).

A disordered region spans residues 51 to 90 (TASTLTKAEVRGGGRKPYKQKHTGRARQGSIRNPHYVGGG). Basic residues predominate over residues 63-75 (GGRKPYKQKHTGR).

It belongs to the universal ribosomal protein uL4 family. In terms of assembly, part of the 50S ribosomal subunit.

Functionally, one of the primary rRNA binding proteins, this protein initially binds near the 5'-end of the 23S rRNA. It is important during the early stages of 50S assembly. It makes multiple contacts with different domains of the 23S rRNA in the assembled 50S subunit and ribosome. In terms of biological role, forms part of the polypeptide exit tunnel. The polypeptide is Large ribosomal subunit protein uL4 (Malacoplasma penetrans (strain HF-2) (Mycoplasma penetrans)).